Here is a 332-residue protein sequence, read N- to C-terminus: F-box/SPRY domain-containing protein 1 (332 aa).

The interval 1-82 (MAENDGETIV…RSPRRPEVSA (82 aa)) is disordered. Polar residues-rich tracts occupy residues 15-28 (CNLT…SSGL) and 49-64 (NPSS…QLTP). An F-box domain is found at 79 to 127 (EVSASRLPLKVLNQIFQYLPLKDLRSAMLTCHSWNNALSMEDSDIWQYL). The B30.2/SPRY domain maps to 138–330 (SDPFLLAELG…VTMVYVGSPQ (193 aa)).

The protein belongs to the FBXO45/Fsn family. In terms of assembly, component of an SCF (SKP1-CUL1-F-box protein) E3 ubiquitin ligase complex composed of cul-1, fsn-1, rpm-1 and skr-1. Interacts (via SPRY domain) with scd-2 (via cytoplasmic domain). Interacts (via SPRY domain) with convertase egl-3 (via C-terminus). In terms of tissue distribution, expressed in GABAergic neuromuscular junctions (NMJs).

The protein resides in the synapse. It participates in protein modification; protein ubiquitination. Its function is as follows. Component of a SCF (SKP1-CUL1-F-box protein) E3 ubiquitin ligase complex which is required for the restriction and/or maturation of synapses in GABAergic neuromuscular junction (NMJ) presynaptic neurons. Promotes NRJ synapse development and synaptic transmission by negatively regulating the daf-2/InsR pathway in muscles. By targeting convertase egl-3 for degradation, negatively modulates insulin-like protein ins-4 and ins-6 processing. May stabilize synapse formation by promoting the down-regulation of scd-2. Regulates axon termination in PLM and ALM neurons. The chain is F-box/SPRY domain-containing protein 1 (fsn-1) from Caenorhabditis elegans.